Reading from the N-terminus, the 265-residue chain is MSAAPLVGYSSSGSEDEAEAGARVRPGAEGRSRGQSPLPGQRLPVPDSVLHMFPSTEEGPVDDSAKHGGRVRTFPHERGNWATHVYIPYEAREEFLDLLDALLCHAQTYVPRLVRMEAFHLSLSQSVVLRHHWILPFVQALKDRVASFHRFCFTTDQVKIYTNQEKTRTFVGLEVTSGHAHFLDLVAEVDRVMEEFDLSTFYQDPSFHISLAWCVGDARLQMEGPCLQELQGIVDEFEDSEMLLRAYAEQIRCKSGNKFFSMPLK.

The interval 1–67 (MSAAPLVGYS…EGPVDDSAKH (67 aa)) is disordered. Positions 20–32 (AGARVRPGAEGRS) are enriched in basic and acidic residues. H120 serves as the catalytic Proton acceptor. 120–122 (HLS) is an AMP binding site. UMP-binding positions include Q164, Y202, and 206–210 (SFHIS). Residues Y202 and 204 to 210 (DPSFHIS) each bind AMP. Catalysis depends on H208, which acts as the Proton donor.

This sequence belongs to the 2H phosphoesterase superfamily. USB1 family. Interacts with PLRG1, CDC5L and PRPF19.

Its subcellular location is the nucleus. The catalysed reaction is a 3'-end uridylyl-uridine-RNA = a 3'-end 2',3'-cyclophospho-uridine-RNA + uridine. It catalyses the reaction a 3'-end uridylyl-adenosine-RNA = a 3'-end 2',3'-cyclophospho-uridine-RNA + adenosine. In terms of biological role, 3'-5' RNA exonuclease that trims the 3' end of oligo(U) and oligo(A) tracts of the pre-U6 small nuclear RNA (snRNA) molecule, leading to the formation of a mature U6 snRNA 3' end-terminated with a 2',3'-cyclic phosphate. Participates in the U6 snRNA 3' end processing that prevents U6 snRNA degradation. In addition also removes uridines from the 3' end of U6atac snRNA and possibly the vault RNA VTRNA1-1. The chain is U6 snRNA phosphodiesterase 1 from Bos taurus (Bovine).